The chain runs to 341 residues: Fructose-1,6-bisphosphatase class 1 1 (341 aa).

Residues E92, D114, L116, and D117 each contribute to the Mg(2+) site. Substrate contacts are provided by residues 117-120 (DGSS), N209, and K275. Residue E281 participates in Mg(2+) binding.

It belongs to the FBPase class 1 family. As to quaternary structure, homotetramer. The cofactor is Mg(2+).

The protein localises to the cytoplasm. It catalyses the reaction beta-D-fructose 1,6-bisphosphate + H2O = beta-D-fructose 6-phosphate + phosphate. The protein operates within carbohydrate biosynthesis; gluconeogenesis. This Leptothrix cholodnii (strain ATCC 51168 / LMG 8142 / SP-6) (Leptothrix discophora (strain SP-6)) protein is Fructose-1,6-bisphosphatase class 1 1.